A 372-amino-acid chain; its full sequence is N-acetylneuraminate-9-phosphate synthase (372 aa).

One can recognise an AFP-like domain in the interval 314–372 (SIVAARNLNKGYRLQLADMAIKVSEPSGLTAEDFLDLVGKELADNIGEDEPILGNSIIN).

It carries out the reaction aldehydo-N-acetyl-D-mannosamine 6-phosphate + phosphoenolpyruvate + H2O = N-acetylneuraminate 9-phosphate + phosphate. The catalysed reaction is aldehydo-D-mannose 6-phosphate + phosphoenolpyruvate + H2O = 3-deoxy-D-glycero-beta-D-galacto-non-2-ulopyranosonate 9-phosphate + phosphate. Its function is as follows. Catalyzes the condensation of phosphoenolpyruvate (PEP) and N-acetylmannosamine 6-phosphate (ManNAc-6-P) or D-mannose 6-phosphate (Man-6-P) to generate the phosphorylated forms of both the sialic acids N-acetylneuraminic acid (Neu5Ac) and deaminoneuraminic acid (KDN), respectively. Essential for biosynthesis of sialic acids in neurons of the central nervous system. The protein is N-acetylneuraminate-9-phosphate synthase of Drosophila melanogaster (Fruit fly).